Consider the following 95-residue polypeptide: Aspartyl/glutamyl-tRNA(Asn/Gln) amidotransferase subunit C (95 aa).

The protein belongs to the GatC family. As to quaternary structure, heterotrimer of A, B and C subunits.

It catalyses the reaction L-glutamyl-tRNA(Gln) + L-glutamine + ATP + H2O = L-glutaminyl-tRNA(Gln) + L-glutamate + ADP + phosphate + H(+). The enzyme catalyses L-aspartyl-tRNA(Asn) + L-glutamine + ATP + H2O = L-asparaginyl-tRNA(Asn) + L-glutamate + ADP + phosphate + 2 H(+). Functionally, allows the formation of correctly charged Asn-tRNA(Asn) or Gln-tRNA(Gln) through the transamidation of misacylated Asp-tRNA(Asn) or Glu-tRNA(Gln) in organisms which lack either or both of asparaginyl-tRNA or glutaminyl-tRNA synthetases. The reaction takes place in the presence of glutamine and ATP through an activated phospho-Asp-tRNA(Asn) or phospho-Glu-tRNA(Gln). In Chromobacterium violaceum (strain ATCC 12472 / DSM 30191 / JCM 1249 / CCUG 213 / NBRC 12614 / NCIMB 9131 / NCTC 9757 / MK), this protein is Aspartyl/glutamyl-tRNA(Asn/Gln) amidotransferase subunit C.